The primary structure comprises 833 residues: Leucine--tRNA ligase (833 aa).

The 'HIGH' region motif lies at 41–52 (PYPSGAGLHVGH). A 'KMSKS' region motif is present at residues 610 to 614 (KMSKS). Position 613 (Lys613) interacts with ATP.

It belongs to the class-I aminoacyl-tRNA synthetase family.

Its subcellular location is the cytoplasm. The enzyme catalyses tRNA(Leu) + L-leucine + ATP = L-leucyl-tRNA(Leu) + AMP + diphosphate. In Streptococcus sanguinis (strain SK36), this protein is Leucine--tRNA ligase.